Here is a 238-residue protein sequence, read N- to C-terminus: Zinc finger protein ZAT6 (238 aa).

The span at 1–15 (MALETLTSPRLSSPM) shows a compositional bias: polar residues. The tract at residues 1–42 (MALETLTSPRLSSPMPTLFQDSALGFHGSKGKRSKRSRSEFD) is disordered. Residues 30–38 (KGKRSKRSR) carry the Nuclear localization signal motif. 2 consecutive C2H2-type zinc fingers follow at residues 89 to 111 (YKCSVCDKAFSSYQALGGHKASH) and 148 to 170 (HVCSICHKSFATGQALGGHKRCH). Residues 175–202 (NGGGVSSSVSNSEDVGSTSHVSSGHRGF) are disordered. A compositionally biased stretch (low complexity) spans 180-193 (SSSVSNSEDVGSTS).

The protein localises to the nucleus. Probable transcription factor that regulates root development and phosphate (Pi) acquisition and homeostasis. Probably acts as a repressor of primary root growth and regulates Pi homeostasis through the control of root architecture. The chain is Zinc finger protein ZAT6 (ZAT6) from Arabidopsis thaliana (Mouse-ear cress).